Consider the following 205-residue polypeptide: Methyltransferase-like 26 B (205 aa).

It belongs to the UPF0585 family.

The chain is Methyltransferase-like 26 B from Danio rerio (Zebrafish).